The chain runs to 696 residues: Polyribonucleotide nucleotidyltransferase (696 aa).

Mg(2+) is bound by residues Asp489 and Asp495. Residues 556 to 615 (PQYVTMKINPEKIRDVIGKGGVVIREITEATNCAIDISDDGTIKIAAHTTEEGEAAKRRI) form the KH domain. The region spanning 625 to 693 (GKVYEGTVVK…RQGRVRLSMK (69 aa)) is the S1 motif domain.

The protein belongs to the polyribonucleotide nucleotidyltransferase family. Component of the RNA degradosome, which is a multiprotein complex involved in RNA processing and mRNA degradation. Mg(2+) serves as cofactor.

Its subcellular location is the cytoplasm. It carries out the reaction RNA(n+1) + phosphate = RNA(n) + a ribonucleoside 5'-diphosphate. In terms of biological role, involved in mRNA degradation. Catalyzes the phosphorolysis of single-stranded polyribonucleotides processively in the 3'- to 5'-direction. This is Polyribonucleotide nucleotidyltransferase from Coxiella burnetii (strain CbuK_Q154) (Coxiella burnetii (strain Q154)).